The following is a 197-amino-acid chain: NAD(P)H-quinone oxidoreductase subunit 6, chloroplastic (197 aa).

Transmembrane regions (helical) follow at residues 10–30 (FVLA…VLLV), 39–59 (LGLV…DFVA), 60–80 (AAQL…AVMI), 94–114 (IGYI…SFVI), and 147–167 (LLGE…AALV).

Belongs to the complex I subunit 6 family. As to quaternary structure, NDH is composed of at least 16 different subunits, 5 of which are encoded in the nucleus.

The protein localises to the plastid. Its subcellular location is the chloroplast thylakoid membrane. It catalyses the reaction a plastoquinone + NADH + (n+1) H(+)(in) = a plastoquinol + NAD(+) + n H(+)(out). The enzyme catalyses a plastoquinone + NADPH + (n+1) H(+)(in) = a plastoquinol + NADP(+) + n H(+)(out). In terms of biological role, NDH shuttles electrons from NAD(P)H:plastoquinone, via FMN and iron-sulfur (Fe-S) centers, to quinones in the photosynthetic chain and possibly in a chloroplast respiratory chain. The immediate electron acceptor for the enzyme in this species is believed to be plastoquinone. Couples the redox reaction to proton translocation, and thus conserves the redox energy in a proton gradient. This chain is NAD(P)H-quinone oxidoreductase subunit 6, chloroplastic (ndhG), found in Adiantum capillus-veneris (Maidenhair fern).